Here is a 126-residue protein sequence, read N- to C-terminus: Protein ApaG (126 aa).

The ApaG domain maps to Ser2–His126.

The chain is Protein ApaG from Ectopseudomonas mendocina (strain ymp) (Pseudomonas mendocina).